A 138-amino-acid chain; its full sequence is Large ribosomal subunit protein uL16 (138 aa).

The interval 1 to 22 (MQQPARTKYRKQQKGRNKGIAT) is disordered. The segment covering 7-17 (TKYRKQQKGRN) has biased composition (basic residues).

This sequence belongs to the universal ribosomal protein uL16 family. In terms of assembly, part of the 50S ribosomal subunit.

In terms of biological role, binds 23S rRNA and is also seen to make contacts with the A and possibly P site tRNAs. This is Large ribosomal subunit protein uL16 from Nitrosospira multiformis (strain ATCC 25196 / NCIMB 11849 / C 71).